The sequence spans 330 residues: Aspartate--ammonia ligase (330 aa).

The protein belongs to the class-II aminoacyl-tRNA synthetase family. AsnA subfamily.

The protein resides in the cytoplasm. The catalysed reaction is L-aspartate + NH4(+) + ATP = L-asparagine + AMP + diphosphate + H(+). It participates in amino-acid biosynthesis; L-asparagine biosynthesis; L-asparagine from L-aspartate (ammonia route): step 1/1. This Escherichia coli O7:K1 (strain IAI39 / ExPEC) protein is Aspartate--ammonia ligase.